The sequence spans 367 residues: B2 bradykinin receptor (367 aa).

At Met1 to Gln36 the chain is on the extracellular side. Residues Asn3 and Asn14 are each glycosylated (N-linked (GlcNAc...) asparagine). Residues Ala37–Leu60 traverse the membrane as a helical segment. At His61–Glu69 the chain is on the cytoplasmic side. A helical transmembrane segment spans residues Ile70–Ala94. Residues Asn95 to Arg107 lie on the Extracellular side of the membrane. The cysteines at positions 106 and 187 are disulfide-linked. A helical membrane pass occupies residues Val108–Ile129. Residues Asp130 to Lys151 lie on the Cytoplasmic side of the membrane. Tyr132 carries the phosphotyrosine modification. Residues Leu152 to Met174 form a helical membrane-spanning segment. At His175–Met197 the chain is on the extracellular side. Residue Asn183 is glycosylated (N-linked (GlcNAc...) asparagine). A helical transmembrane segment spans residues Val198–Leu224. At Gln225–Lys243 the chain is on the cytoplasmic side. A helical transmembrane segment spans residues Ala244–Leu268. Residues Asp269–Asp287 are Extracellular-facing. The chain crosses the membrane as a helical span at residues Val288–Val311. Residues Gly312 to Gln367 are Cytoplasmic-facing. The residue at position 323 (Tyr323) is a Phosphotyrosine. A lipid anchor (S-palmitoyl cysteine) is attached at Cys327. Ser342 carries the post-translational modification Phosphoserine. Thr345 is modified (phosphothreonine). Ser349 and Ser351 each carry phosphoserine; by GRK6.

It belongs to the G-protein coupled receptor 1 family. Bradykinin receptor subfamily. BDKRB2 sub-subfamily. In terms of assembly, forms a complex with PECAM1 and GNAQ. Interacts with PECAM1.

Its subcellular location is the cell membrane. Functionally, receptor for bradykinin. It is associated with G proteins that activate a phosphatidylinositol-calcium second messenger system. The sequence is that of B2 bradykinin receptor (BDKRB2) from Sus scrofa (Pig).